Reading from the N-terminus, the 1363-residue chain is MFLILLISLPTAFAVIGDLKCTTVSINDVDTGVPSISTDTVDVTNGLGTYYVLDRVYLNTTLLLNGYYPTSGSTYRNMALKGTLLLSTLWFKPPFLSDFTNGIFAKVKNTKVIKDGVMYSEFPAITIGSTFVNTSYSVVVQPHTTILGNKLQGFLEISVCQYTMCEYPNTICNPNLGNQRVELWHWDTGVVSCLYKRNFTYDVNADYLYFHFYQEGGTFYAYFTDTGVVTKFLFNVYLGTVLSHYYVMPLTCNSALTLEYWVTPLTSKQYLLAFNQDGVIFNAVDCKSDFMSEIKCKTLSIAPSTGVYELNGYTVQPIADVYRRIPNLPDCNIEAWLNDKSVPSPLNWERKTFSNCNFNMSSLMSFIQAYSFTCNNIDAAKIYGMCFSSITIDKFAIPNGRKVDLQLGNLGYLQSFNYRIDTTATSCQLYYNLPAANVSVSRFNPSTWNRRFGFTEQSVFKPQPAGVFTDHDVVYAQHCFKASTNFCPCKLDGSLCVGNGPGIDAGYKTSGIGTCPAGTNYLTCHNAAQCDCLCTPDPITSKATGPYKCPQTKYLVGIGEHCSGLAIKSDHCGGNPCTCQPQAFLGWSVDSCLQGDRCNIFANFILHDVNSGTTCSTDLQKSNTDIILGVCVNYDLYGITGQGIFVEVNATYYNSWQNLLYDSNGNLYGFRDYLTNRTFMIRSCYSGRVSAAFHANSSEPALLFRNIKCNYVFNNTLSRQLQPINYFDSYLGCVVNADNSTSSVVQTCDLTVGSGYCVDYSTKRRSRRSITTGYRFTNFEPFTVNSVNDSLEPVGGLYEIQIPSEFTIGNMEEFIQTSSPKVTIDCSAFVCGDYAACKSQLVEYGSFCDNINAILTEVNELLDTTQLQVANSLMNGVTLSTKLKDGVNFNVDDINFSPVLGCLGSDCNKVSSRSAIEDLLFSKVKLSDVGFVEAYNNCTGGAEIRDLICVQSYNGIKVLPPLLSENQISGYTLAATSASLFPPWSAAAGVPFYLNVQYRINGIGVTMDVLSQNQKLIANAFNNALGAIQEGFDATNSALVKIQAVVNANAEALNNLLQQLSNRFGAISSSLQEILSRLDALEAQAQIDRLINGRLTALNAYVSQQLSDSTLVKFSAAQAMEKVNECVKSQSSRINFCGNGNHIISLVQNAPYGLYFIHFSYVPTKYVTAKVSPGLCIAGDRGIAPKSGYFVNVNNTWMFTGSGYYYPEPITGNNVVVMSTCAVNYTKAPDVMLNISTPNLPYFKEELDQWFKNQTSVAPDLSLDYINVTFLDLQDEMNRLQEAIKVLNQSYINLKDIGTYEYYVKWPWYVWLLIGFAGVAMLVLLFFICCCTGCGTSCFKKCGGCCDDYTGHQELVIKTSHED.

An N-terminal signal peptide occupies residues 1–13 (MFLILLISLPTAF). Topologically, residues 14 to 1307 (AVIGDLKCTT…GTYEYYVKWP (1294 aa)) are extracellular. Positions 15-298 (VIGDLKCTTV…DFMSEIKCKT (284 aa)) constitute a BetaCoV S1-NTD domain. Disulfide bonds link cysteine 21/cysteine 165, cysteine 160/cysteine 193, cysteine 172/cysteine 252, cysteine 286/cysteine 296, and cysteine 331/cysteine 356. N-linked (GlcNAc...) asparagine; by host glycosylation is found at asparagine 59 and asparagine 133. A glycan (N-linked (GlcNAc...) asparagine; by host) is linked at asparagine 198. Residues 329–617 (PDCNIEAWLN…DVNSGTTCST (289 aa)) form the BetaCoV S1-CTD domain. N-linked (GlcNAc...) asparagine; by host glycosylation is present at asparagine 359. Intrachain disulfides connect cysteine 374–cysteine 427 and cysteine 386–cysteine 615. N-linked (GlcNAc...) asparagine; by host glycosylation is found at asparagine 437, asparagine 649, asparagine 676, asparagine 696, asparagine 714, asparagine 739, and asparagine 788. 2 fusion peptide regions span residues 914–935 (SAIEDLLFSKVKLSDVGFVEAY) and 933–953 (EAYNNCTGGAEIRDLICVQSY). The N-linked (GlcNAc...) asparagine; by host glycan is linked to asparagine 937. A disulfide bridge connects residues cysteine 938 and cysteine 949. A heptad repeat 1 region spans residues 1014-1064 (QKLIANAFNNALGAIQEGFDATNSALVKIQAVVNANAEALNNLLQQLSNRF). A coiled-coil region spans residues 1043–1087 (QAVVNANAEALNNLLQQLSNRFGAISSSLQEILSRLDALEAQAQI). Residues asparagine 1194, asparagine 1224, asparagine 1234, asparagine 1253, asparagine 1267, and asparagine 1288 are each glycosylated (N-linked (GlcNAc...) asparagine; by host). The interval 1258–1296 (APDLSLDYINVTFLDLQDEMNRLQEAIKVLNQSYINLKD) is heptad repeat 2. A coiled-coil region spans residues 1269 to 1297 (TFLDLQDEMNRLQEAIKVLNQSYINLKDI). The chain crosses the membrane as a helical span at residues 1308 to 1328 (WYVWLLIGFAGVAMLVLLFFI). Over 1329-1363 (CCCTGCGTSCFKKCGGCCDDYTGHQELVIKTSHED) the chain is Cytoplasmic. The KxHxx signature appears at 1359-1363 (TSHED).

This sequence belongs to the betacoronaviruses spike protein family. Homotrimer; each monomer consists of a S1 and a S2 subunit. The resulting peplomers protrude from the virus surface as spikes. In terms of processing, specific enzymatic cleavages in vivo yield mature proteins. The precursor is processed into S1 and S2 by host cell furin or another cellular protease to yield the mature S1 and S2 proteins. Additionally, a second cleavage leads to the release of a fusion peptide after viral attachment to host cell receptor. Post-translationally, the cytoplasmic Cys-rich domain is palmitoylated. Spike glycoprotein is digested within host endosomes.

The protein resides in the virion membrane. Its subcellular location is the host endoplasmic reticulum-Golgi intermediate compartment membrane. The protein localises to the host cell membrane. Functionally, attaches the virion to the cell membrane by interacting with host receptor, initiating the infection. Mediates fusion of the virion and cellular membranes by acting as a class I viral fusion protein. Under the current model, the protein has at least three conformational states: pre-fusion native state, pre-hairpin intermediate state, and post-fusion hairpin state. During viral and target cell membrane fusion, the coiled coil regions (heptad repeats) assume a trimer-of-hairpins structure, positioning the fusion peptide in close proximity to the C-terminal region of the ectodomain. The formation of this structure appears to drive apposition and subsequent fusion of viral and target cell membranes. Its function is as follows. Acts as a viral fusion peptide which is unmasked following S2 cleavage occurring upon virus endocytosis. The chain is Spike glycoprotein from Bovine coronavirus (strain 98TXSF-110-ENT) (BCoV-ENT).